The following is a 5065-amino-acid chain: Dynein heavy chain-like protein 1 (5065 aa).

Positions 1 to 1957 are stem; it reads MELEKTHLIN…IIKMADATFE (1957 aa). A coiled-coil region spans residues 1677-1705; it reads QMEGFQKQLDRLSDSLSKIQKALGEYLEK. The AAA 1 stretch occupies residues 1958-2179; the sequence is YGYEYLGMCE…LRSLKSVLNS (222 aa). Position 1996 to 2003 (1996 to 2003) interacts with ATP; it reads GPAGTGKT. The segment at 2203–2223 is disordered; sequence FNETLDNNNNNDNNNERKTTT. Low complexity predominate over residues 2204–2215; sequence NETLDNNNNNDN. AAA stretches follow at residues 2281–2632, 2751–3004, and 3097–3367; these read NEIH…YEYI, DVDR…WKLA, and IFNE…GNRY. 2319–2326 lines the ATP pocket; that stretch reads GDVGTGKS. Residues 2507–2529 form a disordered region; it reads EKNQNGNENGNENEKKNINIINN. Residues 2790 to 2797 and 3135 to 3142 contribute to the ATP site; these read GPPGSGKT and GASGAGKT. The interval 3386–3701 is stalk; sequence IDEKKEEVSS…ETFINLEEAS (316 aa). Coiled coils occupy residues 3388 to 3466 and 3970 to 3997; these read EKKE…LDEQ and TMEKLKVQGAEASKEVNIAEEVMVEVEN. AAA regions lie at residues 3754-3983 and 4289-4507; these read LSRP…EASK and FNKI…VVDS. Basic and acidic residues predominate over residues 4686–4705; it reads KDKNKDEDKNKNKENDDNNK. Residues 4686–4727 form a disordered region; the sequence is KDKNKDEDKNKNKENDDNNKKHIGNNKLVISSSERTESETSE.

This sequence belongs to the dynein heavy chain family. Consists of at least two heavy chains and a number of intermediate and light chains.

It localises to the cytoplasm. The protein localises to the cytoskeleton. Its function is as follows. Acts as a motor for the intracellular retrograde motility of vesicles and organelles along microtubules. Dynein has ATPase activity; the force-producing power stroke is thought to occur on release of ADP. The polypeptide is Dynein heavy chain-like protein 1 (Plasmodium falciparum (isolate 3D7)).